The primary structure comprises 313 residues: Protoheme IX farnesyltransferase (313 aa).

A run of 8 helical transmembrane segments spans residues 34 to 54 (VIEL…RGTV), 56 to 76 (PLLI…ANTL), 105 to 125 (HALI…WSTT), 128 to 148 (LSAH…TLLL), 152 to 172 (TSQN…IGWS), 173 to 193 (AVTG…FFWT), 237 to 257 (VLAT…VAIL), and 291 to 311 (YLAV…PTLL).

The protein belongs to the UbiA prenyltransferase family. Protoheme IX farnesyltransferase subfamily.

Its subcellular location is the cell membrane. The catalysed reaction is heme b + (2E,6E)-farnesyl diphosphate + H2O = Fe(II)-heme o + diphosphate. It functions in the pathway porphyrin-containing compound metabolism; heme O biosynthesis; heme O from protoheme: step 1/1. Converts heme B (protoheme IX) to heme O by substitution of the vinyl group on carbon 2 of heme B porphyrin ring with a hydroxyethyl farnesyl side group. The protein is Protoheme IX farnesyltransferase of Mycolicibacterium gilvum (strain PYR-GCK) (Mycobacterium gilvum (strain PYR-GCK)).